A 215-amino-acid chain; its full sequence is 3-isopropylmalate dehydratase small subunit (215 aa).

Belongs to the LeuD family. LeuD type 1 subfamily. Heterodimer of LeuC and LeuD.

It carries out the reaction (2R,3S)-3-isopropylmalate = (2S)-2-isopropylmalate. It functions in the pathway amino-acid biosynthesis; L-leucine biosynthesis; L-leucine from 3-methyl-2-oxobutanoate: step 2/4. Catalyzes the isomerization between 2-isopropylmalate and 3-isopropylmalate, via the formation of 2-isopropylmaleate. The sequence is that of 3-isopropylmalate dehydratase small subunit from Leptothrix cholodnii (strain ATCC 51168 / LMG 8142 / SP-6) (Leptothrix discophora (strain SP-6)).